Consider the following 211-residue polypeptide: Lipoprotein signal peptidase (211 aa).

Transmembrane regions (helical) follow at residues 12–32 (LLAL…YLAV), 96–116 (AFRN…ILHY), and 127–147 (LQVA…DRLA). Active-site residues include Asp153 and Asp174. Residues 167–187 (WPTFNIADSLIVVGVALLVLH) form a helical membrane-spanning segment.

Belongs to the peptidase A8 family.

Its subcellular location is the cell inner membrane. It catalyses the reaction Release of signal peptides from bacterial membrane prolipoproteins. Hydrolyzes -Xaa-Yaa-Zaa-|-(S,diacylglyceryl)Cys-, in which Xaa is hydrophobic (preferably Leu), and Yaa (Ala or Ser) and Zaa (Gly or Ala) have small, neutral side chains.. It functions in the pathway protein modification; lipoprotein biosynthesis (signal peptide cleavage). Its function is as follows. This protein specifically catalyzes the removal of signal peptides from prolipoproteins. The polypeptide is Lipoprotein signal peptidase (Anaeromyxobacter sp. (strain Fw109-5)).